We begin with the raw amino-acid sequence, 556 residues long: Undecaprenyl phosphate-alpha-4-amino-4-deoxy-L-arabinose arabinosyl transferase (556 aa).

The next 10 helical transmembrane spans lie at 88-108 (FASV…AMML), 116-136 (LLAA…TYSV), 179-199 (FMTK…PVAL), 207-227 (LLLF…PWAL), 258-278 (APFW…LALL), 296-316 (FFLL…KGKL), 319-339 (YILP…SGLA), 355-375 (IVFG…IIVP), 384-404 (LTII…AVSL), and 410-430 (WGYL…GSIP).

This sequence belongs to the glycosyltransferase 83 family.

It is found in the cell inner membrane. The enzyme catalyses 4-amino-4-deoxy-alpha-L-arabinopyranosyl di-trans,octa-cis-undecaprenyl phosphate + lipid IVA = lipid IIA + di-trans,octa-cis-undecaprenyl phosphate.. The protein operates within lipopolysaccharide metabolism; 4-amino-4-deoxy-beta-L-arabinose-lipid A biosynthesis. Its function is as follows. Catalyzes the transfer of the L-Ara4N moiety of the glycolipid undecaprenyl phosphate-alpha-L-Ara4N to lipid A. The modified arabinose is attached to lipid A and is required for resistance to polymyxin and cationic antimicrobial peptides. The polypeptide is Undecaprenyl phosphate-alpha-4-amino-4-deoxy-L-arabinose arabinosyl transferase (Pectobacterium atrosepticum (strain SCRI 1043 / ATCC BAA-672) (Erwinia carotovora subsp. atroseptica)).